Consider the following 423-residue polypeptide: MLDVKMMRQNFDEVKAKLQTRGVKEEILVEFLRLDESRRDLLVKVEEMKKYRNDVSAEIAQLKRNKEDATAKIAEMKEVGGNIKALDAEINAIDEELRGITTTLPNLPDDSVPVGAGEEENVEVRRWSEPRTFAFEPKPHWEVAENLGILDFERGAKVAGSRFVYYKGLGARLERALYNFMLDLHVYEHGYTEMITPYIVNDTAMFGTGQFPKFKEDVFQLQDTDLTLIPTAEVPLTNYYNNEILDGKDLPIYFTALSPSFRSEAGSAGRDTRGLIRLHQFNKVEMVKFSDAEHSYEELEKMTNNAEEILQKLGLPYRVMALSTGDMGFSAAKTYDLEVWIPAQETYREISSCSNCEDFQARRAMIRYRDENDKVQYAHTLNGSGLAVGRTVAAILENYQNEDGSVTVPEVLVPYMGNLTVIK.

231–233 provides a ligand contact to L-serine; the sequence is TAE. 262 to 264 serves as a coordination point for ATP; that stretch reads RSE. Position 285 (Glu285) interacts with L-serine. Residue 349–352 participates in ATP binding; that stretch reads EISS. Ser384 contacts L-serine.

The protein belongs to the class-II aminoacyl-tRNA synthetase family. Type-1 seryl-tRNA synthetase subfamily. In terms of assembly, homodimer. The tRNA molecule binds across the dimer.

The protein resides in the cytoplasm. The enzyme catalyses tRNA(Ser) + L-serine + ATP = L-seryl-tRNA(Ser) + AMP + diphosphate + H(+). The catalysed reaction is tRNA(Sec) + L-serine + ATP = L-seryl-tRNA(Sec) + AMP + diphosphate + H(+). It participates in aminoacyl-tRNA biosynthesis; selenocysteinyl-tRNA(Sec) biosynthesis; L-seryl-tRNA(Sec) from L-serine and tRNA(Sec): step 1/1. Its function is as follows. Catalyzes the attachment of serine to tRNA(Ser). Is also able to aminoacylate tRNA(Sec) with serine, to form the misacylated tRNA L-seryl-tRNA(Sec), which will be further converted into selenocysteinyl-tRNA(Sec). The sequence is that of Serine--tRNA ligase 2 from Enterococcus faecalis (strain ATCC 700802 / V583).